Here is a 180-residue protein sequence, read N- to C-terminus: Signaling threshold-regulating transmembrane adapter 1 (180 aa).

The Extracellular segment spans residues 1 to 24 (MSRDYNCTTDDQLAWGIPSISHAW). An N-linked (GlcNAc...) asparagine glycan is attached at Asn6. A helical; Signal-anchor for type III membrane protein membrane pass occupies residues 25–45 (GLWALLGVVTVLLLISLAALL). Over 46–180 (SQWTRGRRRN…AYANSQPAPS (135 aa)) the chain is Cytoplasmic. Ser63 and Ser66 each carry phosphoserine. Position 73 is a phosphotyrosine (Tyr73). The tract at residues 73–76 (YGNL) is interaction with GRB2. The segment at 81-103 (TGRLSQEPRSEEQDPPSSGGLAR) is disordered. Ser85 and Ser90 each carry phosphoserine. Residues Tyr111, Tyr132, and Tyr153 each carry the phosphotyrosine modification. An interaction with PTPN11 region spans residues 130 to 135 (IKYCEV). Positions 153-156 (YASV) are interaction with CSK. Residue Ser166 is modified to Phosphoserine. The residue at position 172 (Tyr172) is a Phosphotyrosine. An interaction with GRB2 region spans residues 172 to 175 (YANS).

In terms of assembly, homodimer; disulfide-linked. When phosphorylated, interacts with PTPN11/SHP2, GRB2 and CSK. Phosphorylated on tyrosines upon TCR activation; which leads to the recruitment of PTPN11, GRB2 and CSK. Expressed in thymus and spleen, with highest levels in immature thymocytes (at protein level).

It localises to the cell membrane. In terms of biological role, negatively regulates T-cell antigen receptor (TCR)-mediated signaling. Involved in positive selection of T-cells. This is Signaling threshold-regulating transmembrane adapter 1 (Sit1) from Mus musculus (Mouse).